The following is a 635-amino-acid chain: Biosynthetic arginine decarboxylase (635 aa).

Position 100 is an N6-(pyridoxal phosphate)lysine (Lys100). 282-292 (VDIGGGLGVDY) is a substrate binding site.

Belongs to the Orn/Lys/Arg decarboxylase class-II family. SpeA subfamily. Mg(2+) is required as a cofactor. Pyridoxal 5'-phosphate serves as cofactor.

The enzyme catalyses L-arginine + H(+) = agmatine + CO2. It participates in amine and polyamine biosynthesis; agmatine biosynthesis; agmatine from L-arginine: step 1/1. Functionally, catalyzes the biosynthesis of agmatine from arginine. The sequence is that of Biosynthetic arginine decarboxylase from Geobacter metallireducens (strain ATCC 53774 / DSM 7210 / GS-15).